We begin with the raw amino-acid sequence, 199 residues long: Large ribosomal subunit protein mL51 (199 aa).

The transit peptide at 1 to 15 (MNSASISRLTSVIRT) directs the protein to the mitochondrion.

It belongs to the mitochondrion-specific ribosomal protein mL51 family. Component of the mitochondrial ribosome large subunit (39S) which comprises a 16S rRNA and about 50 distinct proteins.

The protein resides in the mitochondrion. The sequence is that of Large ribosomal subunit protein mL51 (mrpl-51) from Caenorhabditis briggsae.